The primary structure comprises 510 residues: Amidophosphoribosyltransferase (510 aa).

Cysteine 2 functions as the Nucleophile in the catalytic mechanism. Residues cysteine 2–asparagine 239 enclose the Glutamine amidotransferase type-2 domain. Residues aspartate 373 and aspartate 374 each coordinate Mg(2+).

This sequence in the C-terminal section; belongs to the purine/pyrimidine phosphoribosyltransferase family. Mg(2+) serves as cofactor.

The enzyme catalyses 5-phospho-beta-D-ribosylamine + L-glutamate + diphosphate = 5-phospho-alpha-D-ribose 1-diphosphate + L-glutamine + H2O. It functions in the pathway purine metabolism; IMP biosynthesis via de novo pathway; N(1)-(5-phospho-D-ribosyl)glycinamide from 5-phospho-alpha-D-ribose 1-diphosphate: step 1/2. This Saccharomyces cerevisiae (strain ATCC 204508 / S288c) (Baker's yeast) protein is Amidophosphoribosyltransferase (ADE4).